We begin with the raw amino-acid sequence, 282 residues long: Fibrinogen-like protein A (282 aa).

A signal peptide spans 1–24 (MFSFIMKAAILLILVGCISFCISS). Positions 61-281 (SHSPEYPRDC…FAEMKLRNRS (221 aa)) constitute a Fibrinogen C-terminal domain. Disulfide bonds link Cys-70-Cys-101 and Cys-224-Cys-240.

This Apostichopus parvimensis (Warty sea cucumber) protein is Fibrinogen-like protein A.